The following is a 399-amino-acid chain: Beta sliding clamp (399 aa).

Belongs to the beta sliding clamp family. In terms of assembly, forms a ring-shaped head-to-tail homodimer around DNA which binds and tethers DNA polymerases and other proteins to the DNA. The DNA replisome complex has a single clamp-loading complex (3 tau and 1 each of delta, delta', psi and chi subunits) which binds 3 Pol III cores (1 core on the leading strand and 2 on the lagging strand) each with a beta sliding clamp dimer. Additional proteins in the replisome are other copies of gamma, psi and chi, Ssb, DNA helicase and RNA primase.

It is found in the cytoplasm. Functionally, confers DNA tethering and processivity to DNA polymerases and other proteins. Acts as a clamp, forming a ring around DNA (a reaction catalyzed by the clamp-loading complex) which diffuses in an ATP-independent manner freely and bidirectionally along dsDNA. Initially characterized for its ability to contact the catalytic subunit of DNA polymerase III (Pol III), a complex, multichain enzyme responsible for most of the replicative synthesis in bacteria; Pol III exhibits 3'-5' exonuclease proofreading activity. The beta chain is required for initiation of replication as well as for processivity of DNA replication. The chain is Beta sliding clamp (dnaN) from Mycolicibacterium paratuberculosis (strain ATCC BAA-968 / K-10) (Mycobacterium paratuberculosis).